The primary structure comprises 206 residues: Large ribosomal subunit protein uL4 (206 aa).

Over residues 65–76 (KQKGTGRARHSS) the composition is skewed to basic residues. Residues 65–94 (KQKGTGRARHSSARAPQFRGGGKAHGPVVR) are disordered.

The protein belongs to the universal ribosomal protein uL4 family. In terms of assembly, part of the 50S ribosomal subunit.

Its function is as follows. One of the primary rRNA binding proteins, this protein initially binds near the 5'-end of the 23S rRNA. It is important during the early stages of 50S assembly. It makes multiple contacts with different domains of the 23S rRNA in the assembled 50S subunit and ribosome. Forms part of the polypeptide exit tunnel. The polypeptide is Large ribosomal subunit protein uL4 (Bartonella quintana (strain Toulouse) (Rochalimaea quintana)).